A 137-amino-acid polypeptide reads, in one-letter code: Large ribosomal subunit protein uL16 (137 aa).

The span at 1–17 (MLSPKRTKFRKQQRGRM) shows a compositional bias: basic residues. Residues 1–24 (MLSPKRTKFRKQQRGRMRGNANSG) form a disordered region.

This sequence belongs to the universal ribosomal protein uL16 family. Part of the 50S ribosomal subunit.

In terms of biological role, binds 23S rRNA and is also seen to make contacts with the A and possibly P site tRNAs. The sequence is that of Large ribosomal subunit protein uL16 from Trichodesmium erythraeum (strain IMS101).